The sequence spans 457 residues: DDB1- and CUL4-associated factor 10 (457 aa).

4 WD repeats span residues 65 to 104 (RTHGAVFNLEYSPDGSVLTVACEQTEVLLFDPVSSKHIKT), 108 to 146 (AHEDCVNNIRFLDNRMFATCSDDTTIALWDLRKLNSKVC), 150 to 189 (GHTSWVKNIEYDTNTRLLVTSGFDGNVIIWDTNRCTEDGC), and 195 to 234 (FHTRFLMRMRLTPDCSKMLISTSSGYLLILHELDLTKSLE). The segment covering 246–265 (TASTSDMTSTSSDTRPSSSP) has biased composition (low complexity). The interval 246-304 (TASTSDMTSTSSDTRPSSSPCHNSDLGPLFEKHMSRSSQREGASPRNSLEVLTPEVPGE) is disordered. Polar residues predominate over residues 281-292 (RSSQREGASPRN). WD repeat units follow at residues 306–346 (DRGN…QEGA), 368–406 (VGRGYIKELCFSPDGRMIASPYAYGIRLLGFDSQCKELV), and 424–457 (SHKDVVLTTKFSPTHCQIASGCLSGRVTLYQPKF).

Belongs to the WD repeat DCAF10 family.

The protein operates within protein modification; protein ubiquitination. Its function is as follows. May function as a substrate receptor for CUL4-DDB1 E3 ubiquitin-protein ligase complex. The protein is DDB1- and CUL4-associated factor 10 (dcaf10) of Xenopus tropicalis (Western clawed frog).